We begin with the raw amino-acid sequence, 146 residues long: Hemoglobin subunit beta-1/2 (146 aa).

Residue valine 1 is modified to N-acetylvaline. Residues 2-146 (HLTPDEKNAV…VATALAHKYH (145 aa)) enclose the Globin domain. Serine 44 carries the phosphoserine modification. The residue at position 59 (lysine 59) is an N6-acetyllysine. Histidine 63 and histidine 92 together coordinate heme b. The residue at position 93 (cysteine 93) is an S-nitrosocysteine. At lysine 144 the chain carries N6-acetyllysine.

This sequence belongs to the globin family. As to quaternary structure, heterotetramer of two alpha chains and two beta chains. Red blood cells.

Involved in oxygen transport from the lung to the various peripheral tissues. The chain is Hemoglobin subunit beta-1/2 (HBB) from Otolemur crassicaudatus (Brown greater galago).